A 501-amino-acid polypeptide reads, in one-letter code: Proline--tRNA ligase (501 aa).

This sequence belongs to the class-II aminoacyl-tRNA synthetase family. ProS type 3 subfamily. In terms of assembly, homodimer.

It is found in the cytoplasm. It catalyses the reaction tRNA(Pro) + L-proline + ATP = L-prolyl-tRNA(Pro) + AMP + diphosphate. Catalyzes the attachment of proline to tRNA(Pro) in a two-step reaction: proline is first activated by ATP to form Pro-AMP and then transferred to the acceptor end of tRNA(Pro). The polypeptide is Proline--tRNA ligase (Halobacterium salinarum (strain ATCC 29341 / DSM 671 / R1)).